A 367-amino-acid polypeptide reads, in one-letter code: Aspartate beta-hydroxylase domain-containing protein 1 (367 aa).

Positions 1-27 (MWRGSSAGGSQGAAMEGTGGELGGQGN) are disordered. Topologically, residues 1–49 (MWRGSSAGGSQGAAMEGTGGELGGQGNWGLEDAPGLLARASLPIMPAWP) are cytoplasmic. Residues 50 to 72 (LPLASSALTLLLGALTSLFLWYC) traverse the membrane as a helical segment. Residues 73-367 (YRLGSQDMQA…ALDFVFAPDP (295 aa)) lie on the Lumenal side of the membrane. Residues 88–122 (RAGAVGGRPGGCSEAGRPSPGRSGESGEGPRTEGL) form a disordered region. Ser106 carries the phosphoserine modification.

The protein belongs to the aspartyl/asparaginyl beta-hydroxylase family.

Its subcellular location is the membrane. In Bos taurus (Bovine), this protein is Aspartate beta-hydroxylase domain-containing protein 1 (ASPHD1).